Here is a 289-residue protein sequence, read N- to C-terminus: Acetyl-coenzyme A carboxylase carboxyl transferase subunit beta (289 aa).

Positions 28-289 (VMTKCPECKK…QGGEMAVWQS (262 aa)) constitute a CoA carboxyltransferase N-terminal domain. Residues Cys32, Cys35, Cys51, and Cys54 each coordinate Zn(2+). A C4-type zinc finger spans residues 32 to 54 (CPECKKIMYTKELLKNLKVCVNC).

The protein belongs to the AccD/PCCB family. Acetyl-CoA carboxylase is a heterohexamer composed of biotin carboxyl carrier protein (AccB), biotin carboxylase (AccC) and two subunits each of ACCase subunit alpha (AccA) and ACCase subunit beta (AccD). Zn(2+) serves as cofactor.

The protein localises to the cytoplasm. The catalysed reaction is N(6)-carboxybiotinyl-L-lysyl-[protein] + acetyl-CoA = N(6)-biotinyl-L-lysyl-[protein] + malonyl-CoA. It functions in the pathway lipid metabolism; malonyl-CoA biosynthesis; malonyl-CoA from acetyl-CoA: step 1/1. Functionally, component of the acetyl coenzyme A carboxylase (ACC) complex. Biotin carboxylase (BC) catalyzes the carboxylation of biotin on its carrier protein (BCCP) and then the CO(2) group is transferred by the transcarboxylase to acetyl-CoA to form malonyl-CoA. The polypeptide is Acetyl-coenzyme A carboxylase carboxyl transferase subunit beta (Bacillus cereus (strain ATCC 14579 / DSM 31 / CCUG 7414 / JCM 2152 / NBRC 15305 / NCIMB 9373 / NCTC 2599 / NRRL B-3711)).